The sequence spans 257 residues: 3-deoxy-manno-octulosonate cytidylyltransferase (257 aa).

It belongs to the KdsB family.

The protein localises to the cytoplasm. The enzyme catalyses 3-deoxy-alpha-D-manno-oct-2-ulosonate + CTP = CMP-3-deoxy-beta-D-manno-octulosonate + diphosphate. Its pathway is nucleotide-sugar biosynthesis; CMP-3-deoxy-D-manno-octulosonate biosynthesis; CMP-3-deoxy-D-manno-octulosonate from 3-deoxy-D-manno-octulosonate and CTP: step 1/1. It participates in bacterial outer membrane biogenesis; lipopolysaccharide biosynthesis. Its function is as follows. Activates KDO (a required 8-carbon sugar) for incorporation into bacterial lipopolysaccharide in Gram-negative bacteria. This Rhodospirillum centenum (strain ATCC 51521 / SW) protein is 3-deoxy-manno-octulosonate cytidylyltransferase.